The chain runs to 244 residues: Tetraspanin-7 (244 aa).

Residues 1 to 11 are Cytoplasmic-facing; that stretch reads METKPVITCLK. Residues 12-35 form a helical membrane-spanning segment; it reads TLLIIYSFVFWITGVILLAVGVWG. The Extracellular portion of the chain corresponds to 36-51; it reads KLTLGTYISLIAENST. Asparagine 49 is a glycosylation site (N-linked (GlcNAc...) asparagine). The helical transmembrane segment at 52 to 70 threads the bilayer; that stretch reads NAPYVLIGTGTTIVVFGLF. Over 71–81 the chain is Cytoplasmic; sequence GCFATCRGSPW. Residues 82 to 107 traverse the membrane as a helical segment; the sequence is MLKLYAMFLSLVFLAELVAGISGFVF. The Extracellular portion of the chain corresponds to 108-208; sequence RHEIKDTFLR…LVTSFMETNM (101 aa). 4 N-linked (GlcNAc...) asparagine glycosylation sites follow: asparagine 150, asparagine 153, asparagine 172, and asparagine 183. A helical membrane pass occupies residues 209–229; that stretch reads GIIAGVAFGIAFSQLIGMLLA. The Cytoplasmic segment spans residues 230–244; that stretch reads CCLSRFITANQYEMV.

The protein belongs to the tetraspanin (TM4SF) family.

It localises to the membrane. In terms of biological role, may be involved in cell proliferation and cell motility. The chain is Tetraspanin-7 (TSPAN7) from Pan troglodytes (Chimpanzee).